The sequence spans 471 residues: Uronate isomerase (471 aa).

Belongs to the metallo-dependent hydrolases superfamily. Uronate isomerase family.

It catalyses the reaction D-glucuronate = D-fructuronate. It carries out the reaction aldehydo-D-galacturonate = keto-D-tagaturonate. It participates in carbohydrate metabolism; pentose and glucuronate interconversion. The polypeptide is Uronate isomerase (Latilactobacillus sakei subsp. sakei (strain 23K) (Lactobacillus sakei subsp. sakei)).